The following is a 361-amino-acid chain: Phospho-N-acetylmuramoyl-pentapeptide-transferase (361 aa).

10 consecutive transmembrane segments (helical) span residues 25–45 (RAVM…PWVI), 73–93 (TMGG…WADL), 97–117 (YVWL…YDDW), 132–152 (FKMA…IATA), 167–187 (TVAY…VIVG), 200–220 (GLAA…AYVA), 240–260 (VVVF…FNAY), 264–284 (VFMG…VAVI), 289–309 (IVLF…MIQV), and 338–358 (QVVV…LSTL).

This sequence belongs to the glycosyltransferase 4 family. MraY subfamily. Mg(2+) serves as cofactor.

It localises to the cell inner membrane. It carries out the reaction UDP-N-acetyl-alpha-D-muramoyl-L-alanyl-gamma-D-glutamyl-meso-2,6-diaminopimeloyl-D-alanyl-D-alanine + di-trans,octa-cis-undecaprenyl phosphate = di-trans,octa-cis-undecaprenyl diphospho-N-acetyl-alpha-D-muramoyl-L-alanyl-D-glutamyl-meso-2,6-diaminopimeloyl-D-alanyl-D-alanine + UMP. Its pathway is cell wall biogenesis; peptidoglycan biosynthesis. Catalyzes the initial step of the lipid cycle reactions in the biosynthesis of the cell wall peptidoglycan: transfers peptidoglycan precursor phospho-MurNAc-pentapeptide from UDP-MurNAc-pentapeptide onto the lipid carrier undecaprenyl phosphate, yielding undecaprenyl-pyrophosphoryl-MurNAc-pentapeptide, known as lipid I. The sequence is that of Phospho-N-acetylmuramoyl-pentapeptide-transferase from Chromobacterium violaceum (strain ATCC 12472 / DSM 30191 / JCM 1249 / CCUG 213 / NBRC 12614 / NCIMB 9131 / NCTC 9757 / MK).